The primary structure comprises 47 residues: Potassium channel toxin gamma-KTx 5.1 (47 aa).

4 cysteine pairs are disulfide-bonded: C5-C23, C11-C34, C20-C39, and C24-C41.

It belongs to the ergtoxin family. Gamma-KTx 5 subfamily. As to expression, expressed by the venom gland.

The protein resides in the secreted. Its function is as follows. Reversibly blocks Kv11/ERG potassium channels. The sequence is that of Potassium channel toxin gamma-KTx 5.1 from Centruroides sculpturatus (Arizona bark scorpion).